A 398-amino-acid chain; its full sequence is Lysophosphatidylserine lipase ABHD12 (398 aa).

At 1-74 the chain is on the cytoplasmic side; sequence MRKRTEPVAL…RKGLWLRLRK (74 aa). Residues 75–95 form a helical membrane-spanning segment; that stretch reads ILFCVLGLYIAIPFLIKLCPG. Residues 96–398 are Extracellular-facing; the sequence is IQAKLIFLNF…LGKSEPEHQH (303 aa). N-linked (GlcNAc...) asparagine glycosylation occurs at N123. The Nucleophile role is filled by S246. Catalysis depends on charge relay system residues D333 and H372.

The protein belongs to the serine esterase family.

It localises to the endoplasmic reticulum membrane. It carries out the reaction 1-(9Z-octadecenoyl)-sn-glycero-3-phospho-L-serine + H2O = sn-glycero-3-phospho-L-serine + (9Z)-octadecenoate + H(+). It catalyses the reaction 1-(9Z-octadecenoyl)-sn-glycero-3-phospho-(1'-sn-glycerol) + H2O = sn-glycero-3-phospho-(1'-sn-glycerol) + (9Z)-octadecenoate + H(+). The catalysed reaction is 1-(9Z-octadecenoyl)-sn-glycero-3-phospho-(1D-myo-inositol) + H2O = sn-glycero-3-phospho-1D-myo-inositol + (9Z)-octadecenoate + H(+). The enzyme catalyses 1-(9Z-octadecenoyl)-sn-glycero-3-phosphoethanolamine + H2O = sn-glycero-3-phosphoethanolamine + (9Z)-octadecenoate + H(+). It carries out the reaction 1-(9Z-octadecenoyl)-sn-glycero-3-phosphocholine + H2O = 1-(9Z-octadecenoyl)-sn-glycerol + phosphocholine + H(+). It catalyses the reaction 2-(9Z-octadecenoyl)-glycerol + H2O = glycerol + (9Z)-octadecenoate + H(+). The catalysed reaction is 1-hexadecanoyl-sn-glycero-3-phospho-L-serine + H2O = sn-glycero-3-phospho-L-serine + hexadecanoate + H(+). The enzyme catalyses 2-(5Z,8Z,11Z,14Z-eicosatetraenoyl)-glycerol + H2O = glycerol + (5Z,8Z,11Z,14Z)-eicosatetraenoate + H(+). It carries out the reaction Hydrolyzes glycerol monoesters of long-chain fatty acids.. It catalyses the reaction 1-decanoylglycerol + H2O = decanoate + glycerol + H(+). The catalysed reaction is 1-dodecanoylglycerol + H2O = dodecanoate + glycerol + H(+). The enzyme catalyses 1-tetradecanoylglycerol + H2O = tetradecanoate + glycerol + H(+). It carries out the reaction 2-hexadecanoylglycerol + H2O = glycerol + hexadecanoate + H(+). It catalyses the reaction 1-(9Z-octadecenoyl)-glycerol + H2O = glycerol + (9Z)-octadecenoate + H(+). The catalysed reaction is 2-(9Z,12Z-octadecadienoyl)-glycerol + H2O = (9Z,12Z)-octadecadienoate + glycerol + H(+). The enzyme catalyses 1-(5Z,8Z,11Z,14Z-eicosatetraenoyl)-glycerol + H2O = glycerol + (5Z,8Z,11Z,14Z)-eicosatetraenoate + H(+). It carries out the reaction 1-(9Z,12Z-octadecadienoyl)-glycerol + H2O = (9Z,12Z)-octadecadienoate + glycerol + H(+). It catalyses the reaction 1-hexadecanoylglycerol + H2O = glycerol + hexadecanoate + H(+). The catalysed reaction is 1-octadecanoylglycerol + H2O = octadecanoate + glycerol + H(+). The enzyme catalyses 1-octadecanoyl-2-(9,10-epoxyoctadecanoyl)-sn-glycero-3-phospho-L-serine + H2O = 9,10-epoxyoctadecanoate + 1-octadecanoyl-sn-glycero-3-phosphoserine + H(+). It carries out the reaction 1-octadecanoyl-2-(10-hydroxyoctadecanoyl)-sn-glycero-3-phospho-L-serine + H2O = 1-octadecanoyl-sn-glycero-3-phosphoserine + 10-hydroxyoctadecanoate + H(+). It catalyses the reaction 1-hexadecanoyl-2-(10-hydroxyoctadecanoyl)-sn-glycero-3-phospho-L-serine + H2O = 10-hydroxyoctadecanoate + 1-hexadecanoyl-sn-glycero-3-phospho-L-serine + H(+). Lysophosphatidylserine (LPS) lipase that mediates the hydrolysis of lysophosphatidylserine, a class of signaling lipids that regulates immunological and neurological processes. Represents a major lysophosphatidylserine lipase in the brain, thereby playing a key role in the central nervous system. Also able to hydrolyze oxidized phosphatidylserine; oxidized phosphatidylserine is produced in response to severe inflammatory stress and constitutes a proapoptotic 'eat me' signal. Also has monoacylglycerol (MAG) lipase activity: hydrolyzes 2-arachidonoylglycerol (2-AG), thereby acting as a regulator of endocannabinoid signaling pathways. Has a strong preference for very-long-chain lipid substrates; substrate specificity is likely due to improved catalysis and not improved substrate binding. The protein is Lysophosphatidylserine lipase ABHD12 of Macaca fascicularis (Crab-eating macaque).